The sequence spans 377 residues: Anhydro-N-acetylmuramic acid kinase (377 aa).

Residue 12–19 (GTSLDGID) participates in ATP binding.

The protein belongs to the anhydro-N-acetylmuramic acid kinase family.

It carries out the reaction 1,6-anhydro-N-acetyl-beta-muramate + ATP + H2O = N-acetyl-D-muramate 6-phosphate + ADP + H(+). The protein operates within amino-sugar metabolism; 1,6-anhydro-N-acetylmuramate degradation. It functions in the pathway cell wall biogenesis; peptidoglycan recycling. Functionally, catalyzes the specific phosphorylation of 1,6-anhydro-N-acetylmuramic acid (anhMurNAc) with the simultaneous cleavage of the 1,6-anhydro ring, generating MurNAc-6-P. Is required for the utilization of anhMurNAc either imported from the medium or derived from its own cell wall murein, and thus plays a role in cell wall recycling. The protein is Anhydro-N-acetylmuramic acid kinase of Methylorubrum extorquens (strain CM4 / NCIMB 13688) (Methylobacterium extorquens).